We begin with the raw amino-acid sequence, 511 residues long: Maturase K (511 aa).

Belongs to the intron maturase 2 family. MatK subfamily.

Its subcellular location is the plastid. The protein localises to the chloroplast. Usually encoded in the trnK tRNA gene intron. Probably assists in splicing its own and other chloroplast group II introns. The protein is Maturase K of Diplacus aurantiacus (Orange bush monkey flower).